The sequence spans 336 residues: Glycerol-3-phosphate dehydrogenase [NAD(P)+] (336 aa).

Positions 16, 17, 37, and 111 each coordinate NADPH. The sn-glycerol 3-phosphate site is built by K111, G140, and T142. Residue A144 coordinates NADPH. Sn-glycerol 3-phosphate contacts are provided by K196, D249, S259, R260, and N261. Catalysis depends on K196, which acts as the Proton acceptor. Residue R260 coordinates NADPH. Positions 284 and 286 each coordinate NADPH.

It belongs to the NAD-dependent glycerol-3-phosphate dehydrogenase family.

The protein localises to the cytoplasm. It carries out the reaction sn-glycerol 3-phosphate + NAD(+) = dihydroxyacetone phosphate + NADH + H(+). It catalyses the reaction sn-glycerol 3-phosphate + NADP(+) = dihydroxyacetone phosphate + NADPH + H(+). It participates in membrane lipid metabolism; glycerophospholipid metabolism. In terms of biological role, catalyzes the reduction of the glycolytic intermediate dihydroxyacetone phosphate (DHAP) to sn-glycerol 3-phosphate (G3P), the key precursor for phospholipid synthesis. This is Glycerol-3-phosphate dehydrogenase [NAD(P)+] from Actinobacillus pleuropneumoniae serotype 5b (strain L20).